We begin with the raw amino-acid sequence, 412 residues long: Peptidase T (412 aa).

His-81 provides a ligand contact to Zn(2+). Asp-83 is an active-site residue. A Zn(2+)-binding site is contributed by Asp-144. Catalysis depends on Glu-178, which acts as the Proton acceptor. Residues Glu-179, Asp-201, and His-383 each coordinate Zn(2+).

The protein belongs to the peptidase M20B family. The cofactor is Zn(2+).

It is found in the cytoplasm. The catalysed reaction is Release of the N-terminal residue from a tripeptide.. In terms of biological role, cleaves the N-terminal amino acid of tripeptides. The chain is Peptidase T from Bacillus cereus (strain Q1).